The sequence spans 371 residues: MSEAKNSNLAPFRLLVKLTNGVGDEFPLYYGNNLIVLGRTIETLEFGNDNFPENIIPVTDSKSDGIIYLTISKDNICQFSDEKGEQIDINSQFNSFEYDGISFHLKNMREDKSRGHILNGMYKNHSVFFFFAVIVVLIIIFSLSLKKDEVKEIAEIIDDKRYGIVNTGQCNYILAETQNDAVWASVALNKTGFTKCRYILVSNKEINRIQQYINQRFPFINLYVLNLVSDKAELLVFLSKERNSSKDTELDKLKNALIVEFPYIKNIKFNYLSDHNARGDAKGIFTKVNVQYKEICENNKVTYSVREELTDEKLELINRLISEHKNIYGDQYIEFSVLLIDDDFKGKSYLNSKDSYVMLNDKHWFFLDKNK.

A helical transmembrane segment spans residues 127 to 141 (VFFFFAVIVVLIIIF).

It is found in the cell inner membrane. The protein resides in the cell outer membrane. Functionally, involved in the secretion of the Ipa antigens. Involved in the intracellular dissemination of Shigella. Part of the Mxi-Spa secretion apparatus. This chain is Protein MxiG (mxiG), found in Shigella flexneri.